A 985-amino-acid polypeptide reads, in one-letter code: Eukaryotic translation initiation factor 4E transporter (985 aa).

The interval 1 to 24 (MDRRSMGETESGDAFLDLKKPPAS) is disordered. Position 5 is a phosphoserine (serine 5). A YXXXXLphi motif motif is present at residues 30 to 36 (YTKEELL). A phosphoserine mark is found at serine 74, serine 78, serine 115, serine 120, serine 136, and serine 138. The tract at residues 131 to 161 (VSSRRSGSPLEKDSDGLRLLGGRRIGSGRII) is interaction with CSDE1. The short motif at 195–211 (RREFGDSKRVFGERRRN) is the Nuclear localization signal element. Residues 208–230 (RRRNDSYTEEEPEWFSAGPTSQS) are disordered. Residues 219–240 (PEWFSAGPTSQSETIELTGFDD) are interaction with DDX6. A phosphoserine mark is found at serine 301, serine 345, serine 353, and serine 374. Residue lysine 410 forms a Glycyl lysine isopeptide (Lys-Gly) (interchain with G-Cter in SUMO2) linkage. Serine 417 carries the phosphoserine modification. The Nuclear export signal signature appears at 438 to 447 (VEAGLKGLKV). An interaction with LSM14A region spans residues 448 to 490 (DQQVKNSTPFMAEHLEETLSAVTNNRQLKKDGDMTAFNKLVST). Lysine 486 bears the N6-acetyllysine mark. Serine 513, serine 564, and serine 587 each carry phosphoserine. The Nuclear export signal motif lies at 613–638 (ITAQMSQLELQQAALEGLALPHDLAV). 2 disordered regions span residues 664–693 (QQRV…SMLS) and 707–803 (ESKE…PTTP). A Phosphoserine modification is found at serine 693. Residues 695-713 (SFTPTSVIRKMYESKEKSK) form an interaction with PATL1 region. 2 stretches are compositionally biased toward basic and acidic residues: residues 707–717 (ESKEKSKEEPA) and 725–735 (DSKEDTQKASE). Positions 736–746 (ENLLSSSSVPS) are enriched in low complexity. Residue serine 752 is modified to Phosphoserine. The span at 754 to 776 (TTNSKLSALQRSSCSTPLSQANR) shows a compositional bias: polar residues. Residues serine 920 and serine 951 each carry the phosphoserine modification. Positions 922–953 (QTTPQNVPSRSGLPHMHSQLEHRPSQRSSSPV) are disordered. The interval 940–985 (QLEHRPSQRSSSPVGLAKWFGSDVLQQPLPSMPAKVISVDELEYRQ) is interaction with LSM14A.

Belongs to the 4E-T/EIF4E-T family. In terms of assembly, interacts (via YXXXXLphi motif) with EIF4E. Interacts (via YXXXXLphi motif) with EIF4E2. Interacts with DDX6. Interacts with CSDE1/UNR. Interacts with CNOT1; promoting association with the CCR4-NOT complex. Interacts with LSM14A; promoting EIF4ENIF1 localization to P-bodies. Interacts with PATL1. Interacts with importin beta only in the presence of importin alpha, suggesting a direct interaction with importin alpha. Interacts with APOBEC3G in an RNA-dependent manner. Phosphorylation by MAPK8/JNK1 and or MAPK9/JNK2 in response to oxidative stress promotes P-body assembly. Phosphorylated during meiotic maturation. In terms of tissue distribution, widely expressed.

Its subcellular location is the cytoplasm. The protein localises to the P-body. It is found in the nucleus. The protein resides in the PML body. It localises to the nucleus speckle. Its function is as follows. EIF4E-binding protein that regulates translation and stability of mRNAs in processing bodies (P-bodies). Plays a key role in P-bodies to coordinate the storage of translationally inactive mRNAs in the cytoplasm and prevent their degradation. Acts as a binding platform for multiple RNA-binding proteins: promotes deadenylation of mRNAs via its interaction with the CCR4-NOT complex, and blocks decapping via interaction with eIF4E (EIF4E and EIF4E2), thereby protecting deadenylated and repressed mRNAs from degradation. Component of a multiprotein complex that sequesters and represses translation of proneurogenic factors during neurogenesis. Promotes miRNA-mediated translational repression. Required for the formation of P-bodies. Involved in mRNA translational repression mediated by the miRNA effector TNRC6B by protecting TNRC6B-targeted mRNAs from decapping and subsequent decay. Also acts as a nucleoplasmic shuttling protein, which mediates the nuclear import of EIF4E and DDX6 by a piggy-back mechanism. This Homo sapiens (Human) protein is Eukaryotic translation initiation factor 4E transporter.